The primary structure comprises 72 residues: Sec-independent protein translocase protein TatA (72 aa).

A helical transmembrane segment spans residues 1-21 (MGSFSIWHWLIVLAVVLLLFG). The disordered stretch occupies residues 43-72 (MADEDAKEDPRTIDAKAEEPVKDVKKTTKS). The segment covering 50–72 (EDPRTIDAKAEEPVKDVKKTTKS) has biased composition (basic and acidic residues).

This sequence belongs to the TatA/E family. In terms of assembly, the Tat system comprises two distinct complexes: a TatABC complex, containing multiple copies of TatA, TatB and TatC subunits, and a separate TatA complex, containing only TatA subunits. Substrates initially bind to the TatABC complex, which probably triggers association of the separate TatA complex to form the active translocon.

It localises to the cell inner membrane. Its function is as follows. Part of the twin-arginine translocation (Tat) system that transports large folded proteins containing a characteristic twin-arginine motif in their signal peptide across membranes. TatA could form the protein-conducting channel of the Tat system. This is Sec-independent protein translocase protein TatA from Brucella suis biovar 1 (strain 1330).